The following is a 356-amino-acid chain: tRNA N6-adenosine threonylcarbamoyltransferase (356 aa).

2 residues coordinate Fe cation: H116 and H120. Substrate is bound by residues 139-143 (IVSGG), D174, G187, D191, and N281. A Fe cation-binding site is contributed by D309.

Belongs to the KAE1 / TsaD family. It depends on Fe(2+) as a cofactor.

Its subcellular location is the cytoplasm. The enzyme catalyses L-threonylcarbamoyladenylate + adenosine(37) in tRNA = N(6)-L-threonylcarbamoyladenosine(37) in tRNA + AMP + H(+). In terms of biological role, required for the formation of a threonylcarbamoyl group on adenosine at position 37 (t(6)A37) in tRNAs that read codons beginning with adenine. Is involved in the transfer of the threonylcarbamoyl moiety of threonylcarbamoyl-AMP (TC-AMP) to the N6 group of A37, together with TsaE and TsaB. TsaD likely plays a direct catalytic role in this reaction. The chain is tRNA N6-adenosine threonylcarbamoyltransferase from Frankia alni (strain DSM 45986 / CECT 9034 / ACN14a).